The chain runs to 675 residues: MTSTKDKIEKLRKILLKYEYFYHTLNQSIISDAEYDYLFRQLYELELKNKELIPSDSPTQKVGSHILQKFKKIKHFSPMLSLENTFDVNGYLNFKKRIKKSIHNNEPLSFCCELKLDGVAISIIYEEGIFVRAATRGDGFEGENITSNARMIDSIPLKLKGIDIPKRLEIRGEVFMLKSNFIKLNKKYKLNQNKYFSNPRNAAAGSLRHIDPNITAERKLIFSCHGCDFFVKTNKELTTHYQRLMKCLSWGIPVNKEIVICSSDIEIIQFYKKIAQKRNFLDFDIDGIVIKVNSLELQKKIGSTTKSPRWAIAFKFSPKERITTLNDVKFQVGRTGVITPVAYFNPVYISGVMISKASLHNKNEIERLNLHFNDTITICRSGDVIPRLLNVIEIRRCDNAKKIIFPSFCPVCNTELLENIEEKLIRCHSGLTCDAQKKQALYHFFSKKSLYVVGLGPKIINELVEKGLVKNPIDFFYLKDIDLIQLKNVGKRKSIKIINSIKKCKKTTLKCFIYALGIPGVGEVVAGKIANYFIKLDKLMNSNILELNCISGVGKIISNNIFNYFSTISNREMVVKLIKQAGIFLNDQEIHKINSEKTYFFNKKIVLTGVFKSFSRIELKTILLSLGAKISNNISRKTDFLIYGNNFGSKFFRAKDLDVKIINQEELNSLIRIKE.

Residues 32 to 36, 81 to 82, and glutamate 113 each bind NAD(+); these read DAEYD and SL. Lysine 115 acts as the N6-AMP-lysine intermediate in catalysis. The NAD(+) site is built by arginine 136, glutamate 173, lysine 291, and lysine 315. Zn(2+)-binding residues include cysteine 409, cysteine 412, cysteine 427, and cysteine 433. In terms of domain architecture, BRCT spans 595-675; sequence SEKTYFFNKK…ELNSLIRIKE (81 aa).

This sequence belongs to the NAD-dependent DNA ligase family. LigA subfamily. Mg(2+) serves as cofactor. Requires Mn(2+) as cofactor.

The enzyme catalyses NAD(+) + (deoxyribonucleotide)n-3'-hydroxyl + 5'-phospho-(deoxyribonucleotide)m = (deoxyribonucleotide)n+m + AMP + beta-nicotinamide D-nucleotide.. DNA ligase that catalyzes the formation of phosphodiester linkages between 5'-phosphoryl and 3'-hydroxyl groups in double-stranded DNA using NAD as a coenzyme and as the energy source for the reaction. It is essential for DNA replication and repair of damaged DNA. The polypeptide is DNA ligase (Buchnera aphidicola subsp. Acyrthosiphon pisum (strain APS) (Acyrthosiphon pisum symbiotic bacterium)).